The sequence spans 531 residues: Sop-2-related protein 3 (531 aa).

Expressed ubiquitously.

The protein localises to the cytoplasm. The protein resides in the nucleus. Probably acts synergistically with sop-2 to maintain the transcriptionally repressive state of homeotic genes in order to regulate various neurogenic identities. Specification of some neuronal identities also involves expression of non-Hox genes. Specifies dopaminergic and serotonergic neuronal cell fate, and regulates neurotransmitter choice and axon pathfinding. In Caenorhabditis elegans, this protein is Sop-2-related protein 3 (sor-3).